We begin with the raw amino-acid sequence, 278 residues long: 3-methyl-2-oxobutanoate hydroxymethyltransferase (278 aa).

Residues Asp-43 and Asp-82 each coordinate Mg(2+). Residues 43 to 44, Asp-82, and Lys-112 each bind 3-methyl-2-oxobutanoate; that span reads DS. Glu-114 is a binding site for Mg(2+). The active-site Proton acceptor is Glu-181.

This sequence belongs to the PanB family. Homodecamer; pentamer of dimers. Requires Mg(2+) as cofactor.

It localises to the cytoplasm. The enzyme catalyses 3-methyl-2-oxobutanoate + (6R)-5,10-methylene-5,6,7,8-tetrahydrofolate + H2O = 2-dehydropantoate + (6S)-5,6,7,8-tetrahydrofolate. Its pathway is cofactor biosynthesis; (R)-pantothenate biosynthesis; (R)-pantoate from 3-methyl-2-oxobutanoate: step 1/2. Its function is as follows. Catalyzes the reversible reaction in which hydroxymethyl group from 5,10-methylenetetrahydrofolate is transferred onto alpha-ketoisovalerate to form ketopantoate. This Bacillus cereus (strain AH187) protein is 3-methyl-2-oxobutanoate hydroxymethyltransferase.